The following is a 383-amino-acid chain: tRNA(Met) cytidine acetate ligase (383 aa).

Residues 7 to 20 (IAEFNPFHSGHEFL), Gly-101, Asn-153, and 178 to 179 (RI) each bind ATP.

This sequence belongs to the TmcAL family.

The protein localises to the cytoplasm. It carries out the reaction cytidine(34) in elongator tRNA(Met) + acetate + ATP = N(4)-acetylcytidine(34) in elongator tRNA(Met) + AMP + diphosphate. Catalyzes the formation of N(4)-acetylcytidine (ac(4)C) at the wobble position of elongator tRNA(Met), using acetate and ATP as substrates. First activates an acetate ion to form acetyladenylate (Ac-AMP) and then transfers the acetyl group to tRNA to form ac(4)C34. This Lactobacillus helveticus (strain DPC 4571) protein is tRNA(Met) cytidine acetate ligase.